Consider the following 300-residue polypeptide: MRCLALDIGGTKIAAAIVKNGEIEQRQQIHTPRENVVEGMHQALGKLLADYEGQFDYVAVASTGIINNGILSALNPKNLGGLAEFPLKASIAKHTDKPIGLLNDAQAATYAEYQLQNSEQVSNFVFITVSTGVGGGIVLNQILQTGSRGIAGHIGHTLADPNGAICGCGRRGCVEAIASGRAIEAVSSQWEEPCDPKEVFERFRKNDEKATALVERSAKAIANLIADLVISLDIQKIAIGGSVGLAEGYLSLVEKYLQDFPSIYCCEIETAKFGQDAGLIGAAYWVKDVLLDKPEGTIYG.

Residues 5–12 and 132–139 each bind ATP; these read ALDIGGTK and GVGGGIVL. Zn(2+) is bound by residues histidine 156, cysteine 166, cysteine 168, and cysteine 173.

The protein belongs to the ROK (NagC/XylR) family. NanK subfamily. As to quaternary structure, homodimer.

It catalyses the reaction an N-acyl-D-mannosamine + ATP = an N-acyl-D-mannosamine 6-phosphate + ADP + H(+). It participates in amino-sugar metabolism; N-acetylneuraminate degradation; D-fructose 6-phosphate from N-acetylneuraminate: step 2/5. In terms of biological role, catalyzes the phosphorylation of N-acetylmannosamine (ManNAc) to ManNAc-6-P. The protein is N-acetylmannosamine kinase (nanK) of Haemophilus influenzae (strain ATCC 51907 / DSM 11121 / KW20 / Rd).